The primary structure comprises 481 residues: Keratin, type I cytoskeletal 39 (481 aa).

The disordered stretch occupies residues 1–25; sequence MDTKGSTVTISSSTPPQNCSGNTNV. The interval 1 to 90 is head; sequence MDTKGSTVTI…RCSDGINSHE (90 aa). The region spanning 90 to 401 is the IF rod domain; sequence EKETMQILNE…SLLESLDGRL (312 aa). Residues 91 to 125 form a coil 1A region; it reads KETMQILNERLASYLEKVRMLEGENADLEDKIQEE. The tract at residues 126–136 is linker 1; the sequence is CSKTLPILCPD. Residues 137–237 form a coil 1B region; the sequence is YLSYYTTIEQ…HEEEINSLQC (101 aa). The segment at 238–253 is linker 12; that stretch reads QLGDRINIEVTAAPSV. The interval 254-397 is coil 2; it reads DLNQILQKMR…ATYRSLLESL (144 aa). The interval 398-481 is tail; the sequence is DGRLPCNPCT…PCYITRPAKV (84 aa).

Belongs to the intermediate filament family. In terms of assembly, heterotetramer of two type I and two type II keratins.

May play a role in late hair differentiation. The sequence is that of Keratin, type I cytoskeletal 39 (Krt39) from Rattus norvegicus (Rat).